The following is a 49-amino-acid chain: YLDHGLGAPAPYPDPLEPKREVCELNPDCDELADHIGFQEAYRRFYGPV.

Positions Tyr1 to Gly47 constitute a Gla domain. A Hydroxyproline modification is found at Pro9. Ca(2+)-binding residues include Glu17, Glu21, Glu24, and Asp30. 3 positions are modified to 4-carboxyglutamate: Glu17, Glu21, and Glu24. A disulfide bond links Cys23 and Cys29.

Belongs to the osteocalcin/matrix Gla protein family. Gamma-carboxyglutamic acid residues are formed by vitamin K dependent carboxylation. These residues are essential for the binding of calcium.

It localises to the secreted. In terms of biological role, the carboxylated form is one of the main organic components of the bone matrix, which constitutes 1-2% of the total bone protein: it acts as a negative regulator of bone formation and is required to limit bone formation without impairing bone resorption or mineralization. The carboxylated form binds strongly to apatite and calcium. Its function is as follows. The uncarboxylated form acts as a hormone secreted by osteoblasts, which regulates different cellular processes, such as energy metabolism, male fertility and brain development. Regulates of energy metabolism by acting as a hormone favoring pancreatic beta-cell proliferation, insulin secretion and sensitivity and energy expenditure. Uncarboxylated osteocalcin hormone also promotes testosterone production in the testes: acts as a ligand for G protein-coupled receptor GPRC6A at the surface of Leydig cells, initiating a signaling response that promotes the expression of enzymes required for testosterone synthesis in a CREB-dependent manner. Also acts as a regulator of brain development: osteocalcin hormone crosses the blood-brain barrier and acts as a ligand for GPR158 on neurons, initiating a signaling response that prevents neuronal apoptosis in the hippocampus, favors the synthesis of all monoamine neurotransmitters and inhibits that of gamma-aminobutyric acid (GABA). Osteocalcin also crosses the placenta during pregnancy and maternal osteocalcin is required for fetal brain development. The polypeptide is Osteocalcin (BGLAP) (Bison priscus (Steppe wisent)).